A 178-amino-acid chain; its full sequence is Large ribosomal subunit protein uL6 (178 aa).

It belongs to the universal ribosomal protein uL6 family. Part of the 50S ribosomal subunit.

In terms of biological role, this protein binds to the 23S rRNA, and is important in its secondary structure. It is located near the subunit interface in the base of the L7/L12 stalk, and near the tRNA binding site of the peptidyltransferase center. The sequence is that of Large ribosomal subunit protein uL6 from Symbiobacterium thermophilum (strain DSM 24528 / JCM 14929 / IAM 14863 / T).